The chain runs to 130 residues: uncharacterized protein (130 aa).

An N-terminal signal peptide occupies residues 1-19; the sequence is MKVLGNILWWAFVGFMAYA.

This is an uncharacterized protein from Escherichia coli (strain K12).